Reading from the N-terminus, the 284-residue chain is Putative mitochondrial carrier protein PET8 (284 aa).

Solcar repeat units follow at residues 2–75, 92–178, and 192–271; these read NTFF…MKVK, IDTT…LKKT, and KGAI…VHSL. The next 6 membrane-spanning stretches (helical) occupy residues 5–25, 50–70, 98–118, 153–169, 194–214, and 252–272; these read FLSL…FFPI, GLGS…ISYD, MLSS…AEVV, GWST…CIQF, AICG…LDFL, and MWIS…HSLL.

This sequence belongs to the mitochondrial carrier (TC 2.A.29) family.

The protein localises to the mitochondrion inner membrane. The sequence is that of Putative mitochondrial carrier protein PET8 (PET8) from Saccharomyces cerevisiae (strain ATCC 204508 / S288c) (Baker's yeast).